A 371-amino-acid polypeptide reads, in one-letter code: MNKLPHETRVVIGMSGGVDSSVAALLLKEQGYDVIGIFMKNWDDTDENGVCTATEDYNDVIEVCNQIGIPYYAVNFEKQYWDKVFTYFLDEYRAGRTPNPDVMCNKEIKFKAFLEHAIALGADYVATGHYARVAYMDGEYKMLRGVDDNKDQTYFLNQLSQEQLSKTMFPLGELKKPQIREMAKEAGLATAAKKDSTGICFIGERNFKDFLSNYLPAQPGVMQTLSGEVKGKHDGLMYYTIGQRHGLGIGGNGDPWFAVGKNLKENILYVDQGFHNELLYGDEVIATNVGWVSNKAKEKEFKCTAKFRYRQEDNKVTVQIVDENTVRILCDEPIRAITPGQAVVFYDGDECLGGATIDEVYRSGKKLDYLG.

ATP-binding positions include 13-20 and Met39; that span reads GMSGGVDS. The interval 99–101 is interaction with target base in tRNA; the sequence is NPD. Cys104 (nucleophile) is an active-site residue. Cys104 and Cys200 are disulfide-bonded. Residue Gly128 coordinates ATP. The interval 150–152 is interaction with tRNA; it reads KDQ. The active-site Cysteine persulfide intermediate is Cys200. The tract at residues 308-309 is interaction with tRNA; the sequence is RY.

Belongs to the MnmA/TRMU family.

The protein localises to the cytoplasm. The enzyme catalyses S-sulfanyl-L-cysteinyl-[protein] + uridine(34) in tRNA + AH2 + ATP = 2-thiouridine(34) in tRNA + L-cysteinyl-[protein] + A + AMP + diphosphate + H(+). Functionally, catalyzes the 2-thiolation of uridine at the wobble position (U34) of tRNA, leading to the formation of s(2)U34. This Bacillus cereus (strain ATCC 10987 / NRS 248) protein is tRNA-specific 2-thiouridylase MnmA.